The primary structure comprises 933 residues: Progesterone receptor (933 aa).

The disordered stretch occupies residues 1–157 (MTELKAKGPR…PEDPPAAPAT (157 aa)). An AF3; mediates transcriptional activation (in isoform B) region spans residues 1 to 164 (MTELKAKGPR…PATQRVLSPL (164 aa)). Residues 1–566 (MTELKAKGPR…YSFESLPQKI (566 aa)) are modulating, Pro-Rich. Lysine 7 participates in a covalent cross-link: Glycyl lysine isopeptide (Lys-Gly) (interchain with G-Cter in SUMO). Position 20 is a phosphoserine (serine 20). The LXXL motif 1 signature appears at 55-59 (LDGLL). Phosphoserine occurs at positions 81 and 102. Positions 115–119 (LDTLL) match the LXXL motif 2 motif. 2 positions are modified to phosphoserine: serine 130 and serine 162. The segment at 165-305 (MSRSGCKVGD…LATTVMDFIH (141 aa)) is mediates transcriptional transrepression (in isoform A). Residues 183–187 (KVLPR) carry the Nuclear localization signal motif. Phosphoserine occurs at positions 190 and 213. Residues 195–241 (LLLPASESPHWSGAPVKPSPQAAAVEVEEEDGSESEESAGPLLKGKP) form a disordered region. The segment covering 220–231 (EVEEEDGSESEE) has biased composition (acidic residues). Residues 232–241 (SAGPLLKGKP) show a composition bias toward low complexity. Phosphoserine; by MAPK1 is present on serine 294. Residues 331 to 351 (GGAGAASAFAPPRSSPCASST) form a disordered region. Positions 335–350 (AASAFAPPRSSPCASS) are enriched in low complexity. Serine 345 carries the phosphoserine; by MAPK modification. Lysine 388 participates in a covalent cross-link: Glycyl lysine isopeptide (Lys-Gly) (interchain with G-Cter in SUMO); alternate. Residue lysine 388 forms a Glycyl lysine isopeptide (Lys-Gly) (interchain with G-Cter in ubiquitin); alternate linkage. Serine 400 carries the phosphoserine; by CDK2 modification. Positions 415–452 (PDFPLGPPPPLPPRATPSRPGEAAVTAAPASASVSSAS) are disordered. A compositionally biased stretch (pro residues) spans 418–429 (PLGPPPPLPPRA). Residues 430 to 452 (TPSRPGEAAVTAAPASASVSSAS) are compositionally biased toward low complexity. The tract at residues 456-546 (STLECILYKA…VYPPYLNYLR (91 aa)) is AF1; mediates transcriptional activation. Residue lysine 531 forms a Glycyl lysine isopeptide (Lys-Gly) (interchain with G-Cter in SUMO) linkage. NR C4-type zinc fingers lie at residues 567–587 (CLIC…CGSC) and 603–627 (CAGR…LRKC). A DNA-binding region (nuclear receptor) is located at residues 567-639 (CLICGDEASG…AGMVLGGRKF (73 aa)). A Phosphoserine modification is found at serine 676. Positions 679-913 (QDIQLIPPLI…EFPEMMSEVI (235 aa)) constitute an NR LBD domain. Positions 687 to 933 (LINLLMSIEP…MVKPLLFHKK (247 aa)) are AF2; mediates transcriptional activation. Residue arginine 766 participates in progesterone binding.

Belongs to the nuclear hormone receptor family. NR3 subfamily. In terms of assembly, interacts with SMARD1 and UNC45A. Interacts with CUEDC2; the interaction promotes ubiquitination, decreases sumoylation, and represses transcriptional activity. Interacts with PIAS3; the interaction promotes sumoylation of PR in a hormone-dependent manner, inhibits DNA-binding, and alters nuclear export. Interacts with SP1; the interaction requires ligand-induced phosphorylation on Ser-345 by ERK1/2 MAPK. Interacts with PRMT2. Isoform A interacts with NCOR2. Isoform B (but not isoform A) interacts with NCOA2 and NCOA1. Isoform B (but not isoform A) interacts with KLF9. Interacts with GTF2B. Post-translationally, phosphorylated on multiple serine sites. Several of these sites are hormone-dependent. Phosphorylation on Ser-294 occurs preferentially on isoform B, is highly hormone-dependent and modulates ubiquitination and sumoylation on Lys-388. Phosphorylation on Ser-102 and Ser-345 also requires induction by hormone. Basal phosphorylation on Ser-81, Ser-162, Ser-190 and Ser-400 is increased in response to progesterone and can be phosphorylated in vitro by the CDK2-A1 complex. Increased levels of phosphorylation on Ser-400 also in the presence of EGF, heregulin, IGF, PMA and FBS. Phosphorylation at this site by CDK2 is ligand-independent, and increases nuclear translocation and transcriptional activity. Phosphorylation at Ser-162 and Ser-294, but not at Ser-190, is impaired during the G(2)/M phase of the cell cycle. Phosphorylation on Ser-345 by ERK1/2 MAPK is required for interaction with SP1. In terms of processing, sumoylation is hormone-dependent and represses transcriptional activity. Sumoylation on all three sites is enhanced by PIAS3. Desumoylated by SENP1. Sumoylation on Lys-388, the main site of sumoylation, is repressed by ubiquitination on the same site, and modulated by phosphorylation at Ser-294. Ubiquitination is hormone-dependent and represses sumoylation on the same site. Promoted by MAPK-mediated phosphorylation on Ser-294. Ubiquitinated by UBR5, leading to its degradation: UBR5 specifically recognizes and binds ligand-bound PGR when it is not associated with coactivators (NCOAs). In presence of NCOAs, the UBR5-degron is not accessible, preventing its ubiquitination and degradation. Post-translationally, palmitoylated by ZDHHC7 and ZDHHC21. Palmitoylation is required for plasma membrane targeting and for rapid intracellular signaling via ERK and AKT kinases and cAMP generation. In terms of tissue distribution, in reproductive tissues the expression of isoform A and isoform B varies as a consequence of developmental and hormonal status. Isoform A and isoform B are expressed in comparable levels in uterine glandular epithelium during the proliferative phase of the menstrual cycle. Expression of isoform B but not of isoform A persists in the glands during mid-secretory phase. In the stroma, isoform A is the predominant form throughout the cycle. Heterogeneous isoform expression between the glands of the endometrium basalis and functionalis is implying region-specific responses to hormonal stimuli.

The protein resides in the nucleus. It localises to the cytoplasm. Its subcellular location is the mitochondrion outer membrane. Its function is as follows. The steroid hormones and their receptors are involved in the regulation of eukaryotic gene expression and affect cellular proliferation and differentiation in target tissues. Depending on the isoform, progesterone receptor functions as a transcriptional activator or repressor. Functionally, ligand-dependent transdominant repressor of steroid hormone receptor transcriptional activity including repression of its isoform B, MR and ER. Transrepressional activity may involve recruitment of corepressor NCOR2. In terms of biological role, transcriptional activator of several progesteron-dependent promoters in a variety of cell types. Involved in activation of SRC-dependent MAPK signaling on hormone stimulation. Increases mitochondrial membrane potential and cellular respiration upon stimulation by progesterone. The chain is Progesterone receptor (PGR) from Homo sapiens (Human).